Here is a 308-residue protein sequence, read N- to C-terminus: Pantothenate synthetase (308 aa).

39-46 provides a ligand contact to ATP; sequence MGALHDGH. His-46 acts as the Proton donor in catalysis. (R)-pantoate is bound at residue Gln-71. Gln-71 contributes to the beta-alanine binding site. 157–160 contributes to the ATP binding site; the sequence is GEKD. Position 163 (Gln-163) interacts with (R)-pantoate. ATP contacts are provided by residues Val-186 and 194 to 197; that span reads MSSR. Residues 286–308 form a disordered region; it reads IETPAGTAGPDGDRQYAQSPWRN.

This sequence belongs to the pantothenate synthetase family. Homodimer.

The protein localises to the cytoplasm. It carries out the reaction (R)-pantoate + beta-alanine + ATP = (R)-pantothenate + AMP + diphosphate + H(+). It functions in the pathway cofactor biosynthesis; (R)-pantothenate biosynthesis; (R)-pantothenate from (R)-pantoate and beta-alanine: step 1/1. Functionally, catalyzes the condensation of pantoate with beta-alanine in an ATP-dependent reaction via a pantoyl-adenylate intermediate. This is Pantothenate synthetase from Mycobacterium avium (strain 104).